Here is a 269-residue protein sequence, read N- to C-terminus: MVMSQGTYTFLTCFAGFWLIWGLIVLLCCFCSFLRRRLKRRQEERLREQNLRALELEPLELEGSLAGSPPGLAPPPPPHRSRLEAPVHAHSHVHVHPLLHHGPAQPHAHPHPHHHALPHPPPSHLSVPPRPWSYPRQAESDMSKPPCYEEAVLMAEPPPPYSEVLTDTRGLYRKIVTPFLSRRDSAEKQEQPPPSYKPLFLDRGYTSALHLPSAPRPAAPCPALCLQADRSRRVFPSWTDSELSSREPLEHGAWRLPVSIPLFGRTTAV.

Residues 1–9 lie on the Extracellular side of the membrane; the sequence is MVMSQGTYT. The required for interaction with NMDA receptors stretch occupies residues 1-44; that stretch reads MVMSQGTYTFLTCFAGFWLIWGLIVLLCCFCSFLRRRLKRRQEE. Positions 2–39 are required for membrane localization; the sequence is VMSQGTYTFLTCFAGFWLIWGLIVLLCCFCSFLRRRLK. The helical; Signal-anchor for type III membrane protein transmembrane segment at 10–30 threads the bilayer; the sequence is FLTCFAGFWLIWGLIVLLCCF. Residues 31-269 lie on the Cytoplasmic side of the membrane; sequence CSFLRRRLKR…IPLFGRTTAV (239 aa). S64 is modified (phosphoserine). Disordered regions lie at residues 64-83 and 98-128; these read SLAGSPPGLAPPPPPHRSRL and LLHHGPAQPHAHPHPHHHALPHPPPSHLSVP. The span at 108-117 shows a compositional bias: basic residues; it reads AHPHPHHHAL. Residues 118 to 128 show a composition bias toward pro residues; the sequence is PHPPPSHLSVP. Residues 146-166 are required for internalization; it reads PCYEEAVLMAEPPPPYSEVLT. The required for apoptosis induction stretch occupies residues 146–269; sequence PCYEEAVLMA…IPLFGRTTAV (124 aa). The PDZ-binding motif lies at 267–269; the sequence is TAV.

In terms of assembly, forms a complex with NMDA receptor zeta subunit GRIN1 and epsilon subunit GRIN2B. Interacts with GRIN2B. Interacts with GRIN1; the interaction is reduced upon NMDA receptor activity. Found in a postsynaptic membrane complex with DLG4 and GRIN1. Interacts with DLG4 (via PDZ3 domain and to lesser degree via PDZ2 domain). Interacts with FBXW7. Found in a complex with JUN and FBXW7. Interacts with JUN and FBXW7; the interaction inhibits ubiquitination-mediated JUN degradation promoting its phosphorylation and transcriptional activity. Interacts with SRC. In terms of processing, palmitoylated. Tyrosine phosphorylated, possibly by SRC. As to expression, expressed in brain. Expressed in the cerebral cortex and especially in hippocampal neural cells (at protein level).

The protein resides in the cell membrane. It is found in the postsynaptic cell membrane. Its subcellular location is the postsynaptic density membrane. It localises to the cytoplasm. The protein localises to the perinuclear region. The protein resides in the synapse. It is found in the cell projection. Its subcellular location is the dendrite. It localises to the nucleus. In terms of biological role, acts as a synapse-to-nucleus messenger to promote NMDA receptor-mediated excitotoxicity in neurons in a JUN-dependent manner. Inhibits ubiquitination-mediated degradation and promotes phosphorylation and transcriptional activity of transcription factor JUN. Might play a redundant role in the regulation of T cell receptor signaling. Might promote apoptosis in T cells. This Rattus norvegicus (Rat) protein is Proline-rich protein 7 (Prr7).